The chain runs to 427 residues: Serine--tRNA ligase (427 aa).

L-serine is bound at residue 230 to 232; that stretch reads TAE. 261–263 is a binding site for ATP; it reads RAE. Residue Glu284 participates in L-serine binding. Position 348 to 351 (348 to 351) interacts with ATP; sequence EISS. Ser384 provides a ligand contact to L-serine.

The protein belongs to the class-II aminoacyl-tRNA synthetase family. Type-1 seryl-tRNA synthetase subfamily. As to quaternary structure, homodimer. The tRNA molecule binds across the dimer.

The protein localises to the cytoplasm. It catalyses the reaction tRNA(Ser) + L-serine + ATP = L-seryl-tRNA(Ser) + AMP + diphosphate + H(+). The enzyme catalyses tRNA(Sec) + L-serine + ATP = L-seryl-tRNA(Sec) + AMP + diphosphate + H(+). It participates in aminoacyl-tRNA biosynthesis; selenocysteinyl-tRNA(Sec) biosynthesis; L-seryl-tRNA(Sec) from L-serine and tRNA(Sec): step 1/1. In terms of biological role, catalyzes the attachment of serine to tRNA(Ser). Is also able to aminoacylate tRNA(Sec) with serine, to form the misacylated tRNA L-seryl-tRNA(Sec), which will be further converted into selenocysteinyl-tRNA(Sec). This chain is Serine--tRNA ligase, found in Syntrophomonas wolfei subsp. wolfei (strain DSM 2245B / Goettingen).